The following is a 385-amino-acid chain: Probable tRNA sulfurtransferase (385 aa).

Residues 57 to 160 form the THUMP domain; it reads DGVIERVKKV…RGNAYVFTDK (104 aa). Residues 180-181, 205-206, R262, G284, and Q293 contribute to the ATP site; these read ML and YY.

It belongs to the ThiI family.

Its subcellular location is the cytoplasm. It carries out the reaction [ThiI sulfur-carrier protein]-S-sulfanyl-L-cysteine + a uridine in tRNA + 2 reduced [2Fe-2S]-[ferredoxin] + ATP + H(+) = [ThiI sulfur-carrier protein]-L-cysteine + a 4-thiouridine in tRNA + 2 oxidized [2Fe-2S]-[ferredoxin] + AMP + diphosphate. The enzyme catalyses [ThiS sulfur-carrier protein]-C-terminal Gly-Gly-AMP + S-sulfanyl-L-cysteinyl-[cysteine desulfurase] + AH2 = [ThiS sulfur-carrier protein]-C-terminal-Gly-aminoethanethioate + L-cysteinyl-[cysteine desulfurase] + A + AMP + 2 H(+). Its pathway is cofactor biosynthesis; thiamine diphosphate biosynthesis. Catalyzes the ATP-dependent transfer of a sulfur to tRNA to produce 4-thiouridine in position 8 of tRNAs, which functions as a near-UV photosensor. Also catalyzes the transfer of sulfur to the sulfur carrier protein ThiS, forming ThiS-thiocarboxylate. This is a step in the synthesis of thiazole, in the thiamine biosynthesis pathway. The sulfur is donated as persulfide by IscS. In Clostridium perfringens (strain SM101 / Type A), this protein is Probable tRNA sulfurtransferase.